A 336-amino-acid chain; its full sequence is Anthranilate phosphoribosyltransferase (336 aa).

5-phospho-alpha-D-ribose 1-diphosphate is bound by residues G80, 83-84 (GD), T88, 90-93 (NIST), 108-116 (KHGNRSITS), and S120. Residue G80 participates in anthranilate binding. A Mg(2+)-binding site is contributed by S92. N111 serves as a coordination point for anthranilate. Anthranilate is bound at residue R166. Residues D224 and E225 each contribute to the Mg(2+) site.

Belongs to the anthranilate phosphoribosyltransferase family. Homodimer. The cofactor is Mg(2+).

It catalyses the reaction N-(5-phospho-beta-D-ribosyl)anthranilate + diphosphate = 5-phospho-alpha-D-ribose 1-diphosphate + anthranilate. The protein operates within amino-acid biosynthesis; L-tryptophan biosynthesis; L-tryptophan from chorismate: step 2/5. In terms of biological role, catalyzes the transfer of the phosphoribosyl group of 5-phosphorylribose-1-pyrophosphate (PRPP) to anthranilate to yield N-(5'-phosphoribosyl)-anthranilate (PRA). The protein is Anthranilate phosphoribosyltransferase of Caldicellulosiruptor saccharolyticus (strain ATCC 43494 / DSM 8903 / Tp8T 6331).